The following is a 552-amino-acid chain: Glucose-6-phosphate isomerase (552 aa).

Glu357 serves as the catalytic Proton donor. Catalysis depends on residues His388 and Lys516. Residues 525-552 (ELASTKPPKHDSSTNALIERYRTRGCRS) form a disordered region.

The protein belongs to the GPI family.

It is found in the cytoplasm. The catalysed reaction is alpha-D-glucose 6-phosphate = beta-D-fructose 6-phosphate. The protein operates within carbohydrate biosynthesis; gluconeogenesis. Its pathway is carbohydrate degradation; glycolysis; D-glyceraldehyde 3-phosphate and glycerone phosphate from D-glucose: step 2/4. Its function is as follows. Catalyzes the reversible isomerization of glucose-6-phosphate to fructose-6-phosphate. This chain is Glucose-6-phosphate isomerase, found in Laribacter hongkongensis (strain HLHK9).